The following is a 185-amino-acid chain: Elongation factor P (185 aa).

It belongs to the elongation factor P family.

The protein resides in the cytoplasm. Its pathway is protein biosynthesis; polypeptide chain elongation. In terms of biological role, involved in peptide bond synthesis. Stimulates efficient translation and peptide-bond synthesis on native or reconstituted 70S ribosomes in vitro. Probably functions indirectly by altering the affinity of the ribosome for aminoacyl-tRNA, thus increasing their reactivity as acceptors for peptidyl transferase. This Burkholderia mallei (strain NCTC 10247) protein is Elongation factor P.